A 688-amino-acid chain; its full sequence is Phosphoinositide 3-phosphatase (688 aa).

The 483-residue stretch at 155–637 folds into the Myotubularin phosphatase domain; the sequence is SWDIYDPIKE…KKVQWWWQLY (483 aa). Catalysis depends on Cys397, which acts as the Phosphocysteine intermediate. The segment covering 647 to 668 has biased composition (basic and acidic residues); sequence ELRHKRDSVPISVDKKSKEHSN. Positions 647–672 are disordered; that stretch reads ELRHKRDSVPISVDKKSKEHSNSDGG.

It belongs to the protein-tyrosine phosphatase family. Non-receptor class myotubularin subfamily.

It localises to the cytoplasm. It catalyses the reaction a 1,2-diacyl-sn-glycero-3-phospho-(1D-myo-inositol-3-phosphate) + H2O = a 1,2-diacyl-sn-glycero-3-phospho-(1D-myo-inositol) + phosphate. Its function is as follows. Lipid phosphatase which dephosphorylates phosphatidylinositol 3-monophosphate (PI3P). Involved in the control of PI3P-dependent signaling and in the maintenance of endosomal system integrity. The chain is Phosphoinositide 3-phosphatase from Saccharomyces cerevisiae (strain ATCC 204508 / S288c) (Baker's yeast).